The sequence spans 151 residues: Lipoprotein signal peptidase (151 aa).

3 helical membrane-spanning segments follow: residues L3–V23, W59–S79, and L85–L107. Active-site residues include D112 and D128. A helical membrane pass occupies residues I123–L143.

It belongs to the peptidase A8 family.

The protein localises to the cell membrane. It carries out the reaction Release of signal peptides from bacterial membrane prolipoproteins. Hydrolyzes -Xaa-Yaa-Zaa-|-(S,diacylglyceryl)Cys-, in which Xaa is hydrophobic (preferably Leu), and Yaa (Ala or Ser) and Zaa (Gly or Ala) have small, neutral side chains.. Its pathway is protein modification; lipoprotein biosynthesis (signal peptide cleavage). Functionally, this protein specifically catalyzes the removal of signal peptides from prolipoproteins. This is Lipoprotein signal peptidase from Latilactobacillus sakei subsp. sakei (strain 23K) (Lactobacillus sakei subsp. sakei).